Here is a 187-residue protein sequence, read N- to C-terminus: Glutathione-dependent formaldehyde-activating enzyme (187 aa).

In terms of domain architecture, CENP-V/GFA spans 20–167 (FAGGTLVCKC…LKELGLEPYD (148 aa)). Zn(2+) is bound by residues Cys27, Cys29, Cys48, Cys50, Cys53, Cys95, and Cys98.

The protein belongs to the Gfa family. Requires Zn(2+) as cofactor.

The enzyme catalyses S-(hydroxymethyl)glutathione = glutathione + formaldehyde. It participates in one-carbon metabolism; formaldehyde degradation; formate from formaldehyde (glutathione route): step 1/3. Its function is as follows. Catalyzes the condensation of formaldehyde and glutathione to S-hydroxymethylglutathione. The sequence is that of Glutathione-dependent formaldehyde-activating enzyme from Bradyrhizobium sp. (strain BTAi1 / ATCC BAA-1182).